The following is a 972-amino-acid chain: MAAVMAAPEPAEAPSSLLLLVVGGECGCPGLLAYVLEELERGVRSWEDVDPDVCSLDEQLKAFVSRHSATFSSIVKGQRSLHHRGETLETLVLLNPSDKSLCDELRNLLMDPAPHKLLVLAGPCLEETGELLLQTGGFSAHHFLQVLGDKEVQDALASAPAAPALTVSCPTFGDWALLGPAPGLRLRLNPPARLPSSEGLRAFLEYVAESLEPPSPFELLEPPATGGFLRLARPCCYVFPGGLGDAAFFAVNGFTVLVNGGSNPKSSFWKLVRHLDRVDAVLVTHAGADSLPGLNSLLRRKLAEREAAAGPQGQHEERLRRLLSPALGVVFLNAREAGSRLRGGEDEAVCARSLLRSLGIVPLPLQRGPQPSCPTVLFEKLGVGRLELFVLHPPPGDPAAPACALLVWQPAAPGDKVVRVLFPGRTPPARLLDGLQRLQHLPCLRRPVVTTQDLEVPSRANSQDSLASRDSTRKEPVRGTVGATSRSAVRREPALATRDQKKDTKPGPTRSTVRDVRRSGPGVVTTKPRVSQNGPRAPVPAAPPAAPAPEFPGEAENIVESERPPAPSPTLSPAQSPPPTAPGNSPERLSLSPLRPEPAPDASPSATTPTLTTPSLPAELGSPHSTEVDESLSVSFEQVLPAGDAGLSLPLRLARRSTSPHDVDLCLVSPCEFSHRKPPPPASPGSSDSSARSQERPPETPPTSVSESLPTLSDSDPVPVADSDDDAGSESAARDPLPTPRVPPPLPDAPGICMVDPEALPPRARQPLSTANSSRGRKAPARPSSASAAPRAATVAAKTKGPVGDRSRPLSARSEPADKPGRVPLTRKPSVPKTVPKMASATRNSSGPSSRPAPLAAGSPVYLDLAYLPGGGAGHLDQNFFLRVRALCYVISGQGQRQEEGLRGVLDALLAGKRQWDLDLQVTLIPTFDSAVMHRWYEETHEQHQALGIRVLGSGSLVSMQDEAFPACKVEF.

The tract at residues 1-715 (MAAVMAAPEP…SESLPTLSDS (715 aa)) is necessary for the microtubule-organizing center localization. Positions 454–469 (LEVPSRANSQDSLASR) are enriched in polar residues. Positions 454–632 (LEVPSRANSQ…PHSTEVDESL (179 aa)) are disordered. Residue S462 is modified to Phosphoserine. A compositionally biased stretch (basic and acidic residues) spans 489-505 (VRREPALATRDQKKDTK). 2 stretches are compositionally biased toward pro residues: residues 537–550 (APVP…PAPE) and 564–581 (PPAP…PPTA). A phosphoserine mark is found at S585, S590, and S592. The segment at 600–972 (PDASPSATTP…EAFPACKVEF (373 aa)) is necessary for interaction with RASSF1. Residues 602 to 620 (ASPSATTPTLTTPSLPAEL) show a composition bias toward low complexity. The tract at residues 644–879 (DAGLSLPLRL…GGGAGHLDQN (236 aa)) is necessary for association with microtubules. Residues S659 and S683 each carry the phosphoserine modification. The interval 671–854 (CEFSHRKPPP…SSGPSSRPAP (184 aa)) is disordered. Over residues 702-721 (PTSVSESLPTLSDSDPVPVA) the composition is skewed to low complexity. Position 723 is a phosphoserine (S723). A compositionally biased stretch (pro residues) spans 737-748 (LPTPRVPPPLPD). Low complexity predominate over residues 781 to 800 (ARPSSASAAPRAATVAAKTK). The tract at residues 874-972 (GHLDQNFFLR…EAFPACKVEF (99 aa)) is necessary for association with actin. A necessary for the mitochondrial aggregation and genome destruction region spans residues 880–904 (FFLRVRALCYVISGQGQRQEEGLRG).

The protein belongs to the MAP1A/MAP1B/MAP1S family. Heterodimer of a heavy and a light chain. Interacts with microtubules and actin. Both MAP1S heavy and light chains interact with microtubules. MAP1S light chain interacts with actin. Interacts with LRPPRC, RASSF1, microtubules and VCY2. Interacts (via C-terminus) with GAN (via Kelch domains). Interacts with WDR47 (via N-terminus of light chain). Interacts with ESR1. In terms of tissue distribution, expressed in cortex cerebellum, dorsal root ganglia, frontal cortex, hippocampus, hypothalamus, mesencephalon, medulla oblongata, occipital cortex, pons, spinal cord, striatum of the brain, neurons, heart, testis and skeletal muscle (at protein level).

It localises to the nucleus. Its subcellular location is the cytoplasm. The protein localises to the cytosol. It is found in the cytoskeleton. The protein resides in the spindle. In terms of biological role, microtubule-associated protein that mediates aggregation of mitochondria resulting in cell death and genomic destruction (MAGD). Plays a role in anchoring the microtubule organizing center to the centrosomes. Binds to DNA. Plays a role in apoptosis. Involved in the formation of microtubule bundles. The chain is Microtubule-associated protein 1S (Map1s) from Rattus norvegicus (Rat).